Reading from the N-terminus, the 168-residue chain is Transmembrane protein 31 (168 aa).

Positions 1–11 (MRLTEKSEGEQ) are enriched in basic and acidic residues. The segment at 1 to 63 (MRLTEKSEGE…LPSRRTPTTS (63 aa)) is disordered. Composition is skewed to polar residues over residues 13-22 (LKPNNSNAPN) and 35-48 (HTPA…ADTQ). The segment covering 49–63 (PSRCRLPSRRTPTTS) has biased composition (low complexity). The next 2 helical transmembrane spans lie at 119–139 (IGLP…YKFF) and 148–168 (FFIL…LIFF).

The protein resides in the membrane. This is Transmembrane protein 31 (TMEM31) from Homo sapiens (Human).